Here is a 115-residue protein sequence, read N- to C-terminus: NADH-ubiquinone oxidoreductase chain 3 (115 aa).

3 helical membrane passes run 3–23 (LYTV…VAFW), 55–75 (FFLV…LLPL), and 86–106 (TMMI…AYEW).

It belongs to the complex I subunit 3 family. As to quaternary structure, core subunit of respiratory chain NADH dehydrogenase (Complex I) which is composed of 45 different subunits. Interacts with TMEM186. Interacts with TMEM242.

It is found in the mitochondrion inner membrane. It catalyses the reaction a ubiquinone + NADH + 5 H(+)(in) = a ubiquinol + NAD(+) + 4 H(+)(out). Functionally, core subunit of the mitochondrial membrane respiratory chain NADH dehydrogenase (Complex I) which catalyzes electron transfer from NADH through the respiratory chain, using ubiquinone as an electron acceptor. Essential for the catalytic activity of complex I. This is NADH-ubiquinone oxidoreductase chain 3 from Mus musculus (Mouse).